The following is a 137-amino-acid chain: Small ribosomal subunit protein uS9 (137 aa).

The interval 105–137 (LKTEGYLKRDPRAVERKKYGLRKARKAPQYSKR) is disordered. Positions 109–122 (GYLKRDPRAVERKK) are enriched in basic and acidic residues. Residues 123 to 137 (YGLRKARKAPQYSKR) show a composition bias toward basic residues.

The protein belongs to the universal ribosomal protein uS9 family.

This is Small ribosomal subunit protein uS9 from Synechococcus sp. (strain JA-3-3Ab) (Cyanobacteria bacterium Yellowstone A-Prime).